The following is a 230-amino-acid chain: tRNA pseudouridine synthase B (230 aa).

Catalysis depends on D45, which acts as the Nucleophile.

The protein belongs to the pseudouridine synthase TruB family. Type 1 subfamily.

The enzyme catalyses uridine(55) in tRNA = pseudouridine(55) in tRNA. In terms of biological role, responsible for synthesis of pseudouridine from uracil-55 in the psi GC loop of transfer RNAs. The polypeptide is tRNA pseudouridine synthase B (Endomicrobium trichonymphae).